The chain runs to 138 residues: Dual specificity phosphatase ibp1 (138 aa).

The Rhodanese domain occupies 19–133 (SPNEISIIDV…WKRRYGGQQG (115 aa)). Cysteine 70 serves as the catalytic Phosphocysteine intermediate.

The protein belongs to the MPI phosphatase family.

Its subcellular location is the cytoplasm. The protein resides in the nucleus. It catalyses the reaction O-phospho-L-tyrosyl-[protein] + H2O = L-tyrosyl-[protein] + phosphate. In terms of biological role, may play a role in DNA replication checkpoint via regulation of hsk1 or may act downstream of hsk1 in an S phase regulatory pathway. This Schizosaccharomyces pombe (strain 972 / ATCC 24843) (Fission yeast) protein is Dual specificity phosphatase ibp1 (ibp1).